Here is a 193-residue protein sequence, read N- to C-terminus: Bifunctional protein PyrR (193 aa).

Substrate-binding positions include 57-58 (TR), R98, 119-127 (DDVLYSGRS), R152, and V176. Residues 115 to 127 (VILVDDVLYSGRS) carry the PRPP-binding motif.

Belongs to the purine/pyrimidine phosphoribosyltransferase family. PyrR subfamily.

It carries out the reaction UMP + diphosphate = 5-phospho-alpha-D-ribose 1-diphosphate + uracil. Regulates the transcription of the pyrimidine nucleotide (pyr) operon in response to exogenous pyrimidines. In terms of biological role, also displays a weak uracil phosphoribosyltransferase activity which is not physiologically significant. This Mycobacterium bovis (strain ATCC BAA-935 / AF2122/97) protein is Bifunctional protein PyrR.